The following is a 486-amino-acid chain: V-type proton ATPase subunit B1 (486 aa).

Gly2 is subject to N-acetylglycine.

The protein belongs to the ATPase alpha/beta chains family. V-ATPase is a heteromultimeric enzyme composed of a peripheral catalytic V1 complex (components A to H) attached to an integral membrane V0 proton pore complex (components: a, c, c'', d and e).

Its subcellular location is the vacuole membrane. Functionally, non-catalytic subunit of the peripheral V1 complex of vacuolar ATPase. V-ATPase is responsible for acidifying a variety of intracellular compartments in eukaryotic cells. The protein is V-type proton ATPase subunit B1 (VHA-B1) of Arabidopsis thaliana (Mouse-ear cress).